The sequence spans 427 residues: Enolase (427 aa).

Gln-163 serves as a coordination point for (2R)-2-phosphoglycerate. Catalysis depends on Glu-205, which acts as the Proton donor. The Mg(2+) site is built by Asp-242, Glu-285, and Asp-312. Lys-337, Arg-366, Ser-367, and Lys-388 together coordinate (2R)-2-phosphoglycerate. Catalysis depends on Lys-337, which acts as the Proton acceptor.

This sequence belongs to the enolase family. Mg(2+) is required as a cofactor.

The protein resides in the cytoplasm. The protein localises to the secreted. Its subcellular location is the cell surface. It carries out the reaction (2R)-2-phosphoglycerate = phosphoenolpyruvate + H2O. Its pathway is carbohydrate degradation; glycolysis; pyruvate from D-glyceraldehyde 3-phosphate: step 4/5. Functionally, catalyzes the reversible conversion of 2-phosphoglycerate (2-PG) into phosphoenolpyruvate (PEP). It is essential for the degradation of carbohydrates via glycolysis. The polypeptide is Enolase (Rhodopseudomonas palustris (strain BisA53)).